The following is a 47-amino-acid chain: LQANRQYLFQGSLKPGPELPEEMKQGLPFLGQPDGQGRFPLRYQGRI.

Belongs to the GSP N family.

Its subcellular location is the cell inner membrane. Functionally, involved in a type II secretion system (T2SS, formerly general secretion pathway, GSP) for the export of proteins. This Aeromonas salmonicida protein is Type II secretion system protein N (exeN).